Here is a 464-residue protein sequence, read N- to C-terminus: Serine/threonine-protein kinase 38-like (464 aa).

At A2 the chain carries N-acetylalanine. Residues 63-88 (KKLRRSQHARKETEFLRLKRTRLGLD) are S100B binding. T75 carries the post-translational modification Phosphothreonine. Residues 90-383 (FESLKVIGRG…VEEIKGHPFF (294 aa)) enclose the Protein kinase domain. ATP is bound by residues 96–104 (IGRGAFGEV) and K119. D213 functions as the Proton acceptor in the catalytic mechanism. S282 is subject to Phosphoserine; by autocatalysis. In terms of domain architecture, AGC-kinase C-terminal spans 384-453 (EGVDWEHIRE…KRFEGLTQRG (70 aa)). T442 carries the post-translational modification Phosphothreonine; by STK24/MST3.

It belongs to the protein kinase superfamily. AGC Ser/Thr protein kinase family. As to quaternary structure, homodimeric S100B binds two molecules of STK38L. Interacts with MICAL1; leading to inhibit the protein kinase activity by antagonizing activation by MST1/STK4. Interacts with MOB1 and MOB2. The cofactor is Mg(2+). As to expression, ubiquitously expressed with highest levels observed in the thymus.

The protein localises to the cytoplasm. It localises to the cytoskeleton. The protein resides in the membrane. It carries out the reaction L-seryl-[protein] + ATP = O-phospho-L-seryl-[protein] + ADP + H(+). The catalysed reaction is L-threonyl-[protein] + ATP = O-phospho-L-threonyl-[protein] + ADP + H(+). With respect to regulation, activated by binding of S100B which releases autoinhibitory N-lobe interactions, enabling ATP to bind and the autophosphorylation of Ser-282. Thr-442 then undergoes calcium-dependent phosphorylation by STK24/MST3. Interactions between phosphorylated Thr-442 and the N-lobe promote additional structural changes that complete the activation of the kinase. Autoinhibition is also released by the binding of MOB1/MOBKL1A and MOB2/HCCA2 to the N-terminal of STK38L. Its function is as follows. Involved in the regulation of structural processes in differentiating and mature neuronal cells. This chain is Serine/threonine-protein kinase 38-like, found in Homo sapiens (Human).